Consider the following 139-residue polypeptide: uncharacterized protein (139 aa).

Residues 83-109 (LIPPKKTSPATSSSLKPPRRPRGCLNG) form a disordered region. The span at 86-98 (PKKTSPATSSSLK) shows a compositional bias: low complexity.

The protein to M.pneumoniae MPN_091 and MPN_463.

This is an uncharacterized protein from Mycoplasma pneumoniae (strain ATCC 29342 / M129 / Subtype 1) (Mycoplasmoides pneumoniae).